Here is a 192-residue protein sequence, read N- to C-terminus: dTTP/UTP pyrophosphatase (192 aa).

The Proton acceptor role is filled by D72.

It belongs to the Maf family. YhdE subfamily. A divalent metal cation is required as a cofactor.

The protein resides in the cytoplasm. The catalysed reaction is dTTP + H2O = dTMP + diphosphate + H(+). The enzyme catalyses UTP + H2O = UMP + diphosphate + H(+). Its function is as follows. Nucleoside triphosphate pyrophosphatase that hydrolyzes dTTP and UTP. May have a dual role in cell division arrest and in preventing the incorporation of modified nucleotides into cellular nucleic acids. The chain is dTTP/UTP pyrophosphatase from Hydrogenovibrio crunogenus (strain DSM 25203 / XCL-2) (Thiomicrospira crunogena).